Here is a 293-residue protein sequence, read N- to C-terminus: Nucleotide-binding protein BCQ_4976 (293 aa).

14-21 (GMSGAGKT) provides a ligand contact to ATP. Position 65–68 (65–68 (DLRG)) interacts with GTP.

This sequence belongs to the RapZ-like family.

Displays ATPase and GTPase activities. The chain is Nucleotide-binding protein BCQ_4976 from Bacillus cereus (strain Q1).